Consider the following 765-residue polypeptide: Transcription factor RFX3 (765 aa).

The segment at residues 189 to 264 (HLQWLLDNYE…YHYYGIRVKP (76 aa)) is a DNA-binding region (RFX-type winged-helix).

The protein belongs to the RFX family.

The protein resides in the nucleus. Transcription factor required for ciliogenesis and islet cell differentiation during endocrine pancreas development. The protein is Transcription factor RFX3 (rfx3) of Danio rerio (Zebrafish).